A 77-amino-acid chain; its full sequence is MASIEKRIKEIVAEQLGVDEAQVTNESSFMDDLGADSLDTVELVMALEEEFEIEISDEDAEKIQSVQDAIDYITDHT.

Positions 2-77 (ASIEKRIKEI…DAIDYITDHT (76 aa)) constitute a Carrier domain. Residue S37 is modified to O-(pantetheine 4'-phosphoryl)serine.

This sequence belongs to the acyl carrier protein (ACP) family. In terms of processing, 4'-phosphopantetheine is transferred from CoA to a specific serine of apo-ACP by AcpS. This modification is essential for activity because fatty acids are bound in thioester linkage to the sulfhydryl of the prosthetic group.

It localises to the cytoplasm. The protein operates within lipid metabolism; fatty acid biosynthesis. Its function is as follows. Carrier of the growing fatty acid chain in fatty acid biosynthesis. The chain is Acyl carrier protein from Geobacter sp. (strain M21).